The following is a 563-amino-acid chain: Putative cytochrome c oxidase subunit 1-beta (563 aa).

A run of 7 helical transmembrane segments spans residues 34 to 54 (IGHLYLITSFAFFLIGGVMAL), 76 to 96 (LFTLHGTIMLLLFATPTFAGF), 117 to 137 (MLSYWLFLFGGLIVLGSLAVP), 164 to 184 (MWIMGLALAGFGTILGSVNFL), 208 to 228 (LFTSILVLMAFPVLAAALLVL), 252 to 272 (LFWFFGHPEVYIIALPFFGII), and 284 to 304 (IFGYLTLIGATAAITGLSVVV). Position 80 (histidine 80) interacts with Fe(II)-heme a. Histidine 258 and tyrosine 262 together coordinate Cu cation. The segment at residues 258 to 262 (HPEVY) is a cross-link (1'-histidyl-3'-tyrosine (His-Tyr)). 2 residues coordinate Cu cation: histidine 307 and histidine 308. The next 2 membrane-spanning stretches (helical) occupy residues 309–329 (MFATGAVLLPFFSFMSFLIAV) and 353–373 (MLWATGFLVSFLFGGLTGVIL). Residue histidine 391 participates in heme a3 binding. 3 consecutive transmembrane segments (helical) span residues 392-412 (FHYVVFGTVVFATFGGFYFWW), 427-447 (IHFWTLFVGFHTTFLVQHWLG), and 470-490 (LSTIGAFLLGMSTLPFLYNVW). Residue histidine 393 coordinates Fe(II)-heme a. The disordered stretch occupies residues 536–563 (AFDLHHPAHAGEAPQPEPKHEQADREPS). Residues 552 to 563 (EPKHEQADREPS) are compositionally biased toward basic and acidic residues.

The protein belongs to the heme-copper respiratory oxidase family. In terms of assembly, associates with subunits II, III and IV to form cytochrome c oxidase. Requires Cu(2+) as cofactor. The cofactor is heme.

The protein localises to the cell membrane. The catalysed reaction is 4 Fe(II)-[cytochrome c] + O2 + 8 H(+)(in) = 4 Fe(III)-[cytochrome c] + 2 H2O + 4 H(+)(out). The protein operates within energy metabolism; oxidative phosphorylation. Functionally, cytochrome c oxidase is the component of the respiratory chain that catalyzes the reduction of oxygen to water. Subunits 1-3 form the functional core of the enzyme complex. CO I is the catalytic subunit of the enzyme. Electrons originating in cytochrome c are transferred via the copper A center of subunit 2 and heme A of subunit 1 to the bimetallic center formed by heme A3 and copper B. In Streptomyces avermitilis (strain ATCC 31267 / DSM 46492 / JCM 5070 / NBRC 14893 / NCIMB 12804 / NRRL 8165 / MA-4680), this protein is Putative cytochrome c oxidase subunit 1-beta (ctaD2).